A 619-amino-acid chain; its full sequence is MIQRLIPLNRKASNFTQILEKGTSLLHYSSITEAKLSYKERLRNGIVDIKVNDAIDLFESMIQSRPLPTPIDFNRLCSAVARTKQYDLVLGFCKGMELNGIEHDMYTMTIMINCYCRKKKLLFAFSVLGRAWKLGYEPDTITFSTLVNGFCLEGRVSEAVALVDRMVEMKQRPDLVTVSTLINGLCLKGRVSEALVLIDRMVEYGFQPDEVTYGPVLNRLCKSGNSALALDLFRKMEERNIKASVVQYSIVIDSLCKDGSFDDALSLFNEMEMKGIKADVVTYSSLIGGLCNDGKWDDGAKMLREMIGRNIIPDVVTFSALIDVFVKEGKLLEAKELYNEMITRGIAPDTITYNSLIDGFCKENCLHEANQMFDLMVSKGCEPDIVTYSILINSYCKAKRVDDGMRLFREISSKGLIPNTITYNTLVLGFCQSGKLNAAKELFQEMVSRGVPPSVVTYGILLDGLCDNGELNKALEIFEKMQKSRMTLGIGIYNIIIHGMCNASKVDDAWSLFCSLSDKGVKPDVVTYNVMIGGLCKKGSLSEADMLFRKMKEDGCTPDDFTYNILIRAHLGGSGLISSVELIEEMKVCGFSADSSTIKMVIDMLSDRRLDKSFLDMLS.

Residues 1–28 constitute a mitochondrion transit peptide; it reads MIQRLIPLNRKASNFTQILEKGTSLLHY. 15 PPR repeats span residues 69–103, 104–138, 139–173, 174–208, 209–243, 244–278, 279–313, 314–348, 349–383, 384–418, 419–453, 454–488, 489–523, 524–558, and 559–593; these read TPID…GIEH, DMYT…GYEP, DTIT…KQRP, DLVT…GFQP, DEVT…NIKA, SVVQ…GIKA, DVVT…NIIP, DVVT…GIAP, DTIT…GCEP, DIVT…GLIP, NTIT…GVPP, SVVT…RMTL, GIGI…GVKP, DVVT…GCTP, and DDFT…GFSA.

This sequence belongs to the PPR family. P subfamily.

Its subcellular location is the mitochondrion. This is Pentatricopeptide repeat-containing protein At3g22470, mitochondrial from Arabidopsis thaliana (Mouse-ear cress).